The sequence spans 404 residues: Cysteine desulfurase IscS (404 aa).

Pyridoxal 5'-phosphate is bound by residues 75-76 (AT), N155, Q183, and 203-205 (SGH). K206 bears the N6-(pyridoxal phosphate)lysine mark. T243 contributes to the pyridoxal 5'-phosphate binding site. C328 functions as the Cysteine persulfide intermediate in the catalytic mechanism. C328 lines the [2Fe-2S] cluster pocket.

Belongs to the class-V pyridoxal-phosphate-dependent aminotransferase family. NifS/IscS subfamily. In terms of assembly, homodimer. Forms a heterotetramer with IscU, interacts with other sulfur acceptors. It depends on pyridoxal 5'-phosphate as a cofactor.

It is found in the cytoplasm. The catalysed reaction is (sulfur carrier)-H + L-cysteine = (sulfur carrier)-SH + L-alanine. Its pathway is cofactor biosynthesis; iron-sulfur cluster biosynthesis. Its function is as follows. Master enzyme that delivers sulfur to a number of partners involved in Fe-S cluster assembly, tRNA modification or cofactor biosynthesis. Catalyzes the removal of elemental sulfur atoms from cysteine to produce alanine. Functions as a sulfur delivery protein for Fe-S cluster synthesis onto IscU, an Fe-S scaffold assembly protein, as well as other S acceptor proteins. The chain is Cysteine desulfurase IscS from Pectobacterium carotovorum subsp. carotovorum (strain PC1).